The primary structure comprises 163 residues: N5-carboxyaminoimidazole ribonucleotide mutase (163 aa).

S11, D14, and R41 together coordinate substrate.

The protein belongs to the AIR carboxylase family. Class I subfamily.

The catalysed reaction is 5-carboxyamino-1-(5-phospho-D-ribosyl)imidazole + H(+) = 5-amino-1-(5-phospho-D-ribosyl)imidazole-4-carboxylate. Its pathway is purine metabolism; IMP biosynthesis via de novo pathway; 5-amino-1-(5-phospho-D-ribosyl)imidazole-4-carboxylate from 5-amino-1-(5-phospho-D-ribosyl)imidazole (N5-CAIR route): step 2/2. In terms of biological role, catalyzes the conversion of N5-carboxyaminoimidazole ribonucleotide (N5-CAIR) to 4-carboxy-5-aminoimidazole ribonucleotide (CAIR). The sequence is that of N5-carboxyaminoimidazole ribonucleotide mutase from Pseudomonas aeruginosa (strain ATCC 15692 / DSM 22644 / CIP 104116 / JCM 14847 / LMG 12228 / 1C / PRS 101 / PAO1).